Reading from the N-terminus, the 696-residue chain is Zinc finger SWIM domain-containing protein 3 (696 aa).

Residues 531-572 (VDVQLLEDSHQVSKDGCSCSCSFQQWYHLPCRHILALLHTSQ) form an SWIM-type zinc finger.

This is Zinc finger SWIM domain-containing protein 3 (ZSWIM3) from Homo sapiens (Human).